The chain runs to 395 residues: MHTHASRPHARQSALPRRAALFDFPASADLSPDTGAARQHTIQWLSRFRVFENHASVEEYDALRFDVLTGLFYPRATGADLNLGSDLVGWYFVFDDQFDGELGCRPEEVARLVADVIRVTEEDMAPGGTGGGEGPLLESFRDLWHRINSGRPRVWRDRFRHHWLEYLHSYHREALERTGAAPADGGGDAPRSVEDVLALRRHSIGVQPCLDLNEPFGGYTLPSALHGGFPLARMREATDDVVVFTNDIASLDKELAVGDVHNSVIVQWKLAGGGVEDAVRHIAGLANARYGWFEETAARLPELLAEAGADPGTHRAVGRYVDGMRHVMTGNLGWSLRTARYDERGTEAVSGGRERPWARLTGAEDLIRAGRGAPPPPGSGPDTRQPMPSEPSQLA.

Mg(2+) contacts are provided by D95, N246, S250, and E254. The span at 346 to 357 shows a compositional bias: basic and acidic residues; the sequence is TEAVSGGRERPW. A disordered region spans residues 346-395; the sequence is TEAVSGGRERPWARLTGAEDLIRAGRGAPPPPGSGPDTRQPMPSEPSQLA.

It belongs to the terpene synthase family. The cofactor is Mg(2+).

The enzyme catalyses (2E,6E)-farnesyl diphosphate + H2O = (+)-isoafricanol + diphosphate. Functionally, catalyzes the cyclization of farnesyl diphosphate (FPP) to isoafricanol. This Streptomyces malaysiensis protein is Isoafricanol synthase.